Consider the following 144-residue polypeptide: MAKKKIEAIIKLQVAAGKANPSPPIGPALGQHGVNIMGFCKEFNAKTQGMEPGMPIPVEISVYSDRSFTFEMKTPPASYLIKKAINVKSGSSKPSKEFVGTITRAQLEEIAKVKDPDLTAADLDAAVRIIAGSARSMGVKVEGV.

The protein belongs to the universal ribosomal protein uL11 family. Part of the ribosomal stalk of the 50S ribosomal subunit. Interacts with L10 and the large rRNA to form the base of the stalk. L10 forms an elongated spine to which L12 dimers bind in a sequential fashion forming a multimeric L10(L12)X complex. One or more lysine residues are methylated.

Functionally, forms part of the ribosomal stalk which helps the ribosome interact with GTP-bound translation factors. This Francisella tularensis subsp. mediasiatica (strain FSC147) protein is Large ribosomal subunit protein uL11.